Reading from the N-terminus, the 140-residue chain is ATP synthase epsilon chain (140 aa).

The protein belongs to the ATPase epsilon chain family. In terms of assembly, F-type ATPases have 2 components, CF(1) - the catalytic core - and CF(0) - the membrane proton channel. CF(1) has five subunits: alpha(3), beta(3), gamma(1), delta(1), epsilon(1). CF(0) has three main subunits: a, b and c.

The protein resides in the cell inner membrane. Its function is as follows. Produces ATP from ADP in the presence of a proton gradient across the membrane. This chain is ATP synthase epsilon chain (atpC), found in Vibrio alginolyticus.